The sequence spans 213 residues: MSILSIVLTGFGLAMDAFAVSVAKGITLTRVKAKDALKVALFFGGFQALMPLIGWGAGRYFADYIKAFDHWIAFILLGFIGGKMIFEALKEEDEEKAEVAVSMEVNKNKEREFANMKRKEELSAKNLTVLAIATSIDALAVGVSFAFLGISIVQTIIIIGIITFVLCFLGVIIGEKLGDIFKNYAEIVGGVILILIGINILLEHTGIIEKLFS.

The next 6 membrane-spanning stretches (helical) occupy residues 3 to 23 (ILSI…VSVA), 36 to 56 (ALKV…IGWG), 67 to 87 (AFDH…MIFE), 130 to 150 (LAIA…FLGI), 152 to 172 (IVQT…LGVI), and 187 to 207 (IVGG…HTGI).

It belongs to the MntP (TC 9.B.29) family.

The protein localises to the cell membrane. Probably functions as a manganese efflux pump. The polypeptide is Putative manganese efflux pump MntP (Clostridium perfringens (strain SM101 / Type A)).